Reading from the N-terminus, the 709-residue chain is MENFDGKSMPPTPVPIGSSQFYRWMPHPIVDTPPSDATWRKPVPRGRIRDLVAAFDQCSGMLEQKPPPPPTQRVESLENEHIAPPPTSKSSKIPEILAKKSEKYISPYEKRHFHGRRGTQAVVFNSNNAQNAPNVGGAYPYGATPLKLRNLAQKMDKEELYVADDVGISKKSENFENSDDDVANFQELLVLDEVLENAENSENLESQQYDEESTLNRTFQDSGVPENQENLLQLPECPKTPKFTSSPTLFTPYAAGEPIVEYRCSSGSAGGPLKIVVKKLQAPIALATSTPKPAMCRPPKHSEPPPAFQDSFVSSISNWSAVDHHATDSRRQMNRLLNSIDETRHHILLAEHSLLEAQKSKCPMQELASQRVLLICRERLKVQLEEVRRLQAMTVVRHPPPPINRHFKSTMVISNISLQFNKHFHSRGSYAFLVLLKCRTEVEATGVVTLLAQFQTPQNFILFGEHLRFSNLPVDFTIGMEIYMMRVPEHRPPEKTCAAFLAQKVRNLLVPSNAAHRRPTTSTPQKSIQNATSPACDFQLCGNLTLDRDSSGDNRRFYLDDVIYPLEGTVKLNSHCTSLPDAIDMEYRGFLHILHDSASPLERAKKVPIWHKYWSLLHRGAILFWSTPQEEVHEKVPIFQIDLTKCTNNSIEESREMSQGAEHEFHIELLIDQDPDLIEKRRVILAAESSDHLNSWLSAINDTLDILRS.

The region spanning 584–705 is the PH domain; it reads DMEYRGFLHI…WLSAINDTLD (122 aa).

The sequence is that of Anillin-like protein 3 (ani-3) from Caenorhabditis elegans.